Reading from the N-terminus, the 411-residue chain is L-cysteine:1D-myo-inositol 2-amino-2-deoxy-alpha-D-glucopyranoside ligase (411 aa).

Cysteine 43 is a binding site for Zn(2+). L-cysteinyl-5'-AMP is bound by residues 43–46, threonine 58, and 81–83; these read CGIT and NVT. Residues 45–55 carry the 'HIGH' region motif; that stretch reads ITPYDATHLGH. The 'ERGGDP' region motif lies at 186–191; sequence QRGGDP. An L-cysteinyl-5'-AMP-binding site is contributed by tryptophan 226. A Zn(2+)-binding site is contributed by cysteine 230. 248–250 lines the L-cysteinyl-5'-AMP pocket; that stretch reads GSD. Histidine 255 serves as a coordination point for Zn(2+). Isoleucine 282 contributes to the L-cysteinyl-5'-AMP binding site. Residues 288–292 carry the 'KMSKS' region motif; it reads KMSKS.

It belongs to the class-I aminoacyl-tRNA synthetase family. MshC subfamily. Monomer. The cofactor is Zn(2+).

The catalysed reaction is 1D-myo-inositol 2-amino-2-deoxy-alpha-D-glucopyranoside + L-cysteine + ATP = 1D-myo-inositol 2-(L-cysteinylamino)-2-deoxy-alpha-D-glucopyranoside + AMP + diphosphate + H(+). In terms of biological role, catalyzes the ATP-dependent condensation of GlcN-Ins and L-cysteine to form L-Cys-GlcN-Ins. This chain is L-cysteine:1D-myo-inositol 2-amino-2-deoxy-alpha-D-glucopyranoside ligase, found in Mycobacterium marinum (strain ATCC BAA-535 / M).